A 261-amino-acid chain; its full sequence is Hemin import ATP-binding protein HmuV (261 aa).

In terms of domain architecture, ABC transporter spans 3–243 (LQAQDLSVDR…ANLRRVYGVE (241 aa)). 35-42 (GANGAGKS) lines the ATP pocket.

This sequence belongs to the ABC transporter superfamily. Heme (hemin) importer (TC 3.A.1.14.5) family. In terms of assembly, the complex is composed of two ATP-binding proteins (HmuV), two transmembrane proteins (HmuU) and a solute-binding protein (HmuT).

Its subcellular location is the cell inner membrane. In terms of biological role, part of the ABC transporter complex HmuTUV involved in hemin import. Responsible for energy coupling to the transport system. This is Hemin import ATP-binding protein HmuV from Bordetella avium (strain 197N).